A 1271-amino-acid polypeptide reads, in one-letter code: Breakpoint cluster region protein (1271 aa).

The residue at position 1 (methionine 1) is an N-acetylmethionine. Residues methionine 1–alanine 426 are kinase. Residues valine 28 to arginine 55 adopt a coiled-coil conformation. The interval lysine 67–glutamate 173 is disordered. A compositionally biased stretch (low complexity) spans alanine 87–alanine 105. At serine 122 the chain carries Phosphoserine. Over residues proline 123–alanine 138 the composition is skewed to low complexity. Serine 139 is subject to Phosphoserine. At tyrosine 177 the chain carries Phosphotyrosine; by HCK. The segment covering glutamate 185–aspartate 198 has biased composition (basic and acidic residues). Disordered regions lie at residues glutamate 185–glutamate 247, glycine 286–histidine 392, and asparagine 416–alanine 476. The binding to ABL SH2-domain stretch occupies residues serine 197–threonine 385. The segment covering arginine 199–methionine 208 has biased composition (polar residues). Phosphoserine occurs at positions 202, 215, 222, and 236. Tyrosine 246 is subject to Phosphotyrosine; by FES. Composition is skewed to low complexity over residues serine 346–serine 356 and serine 369–serine 382. Residues serine 356, serine 377, and serine 382 each carry the phosphoserine modification. Threonine 385 carries the post-translational modification Phosphothreonine. Residues aspartate 441–aspartate 451 are compositionally biased toward basic and acidic residues. Phosphoserine occurs at positions 459 and 463. An Omega-N-methylarginine modification is found at arginine 471. A phosphoserine mark is found at serine 473 and serine 488. The DH domain occupies methionine 498 to glutamate 691. Tyrosine 554 bears the Phosphotyrosine mark. Position 641 is a phosphothreonine (threonine 641). Position 644 is a phosphotyrosine (tyrosine 644). Threonine 693 is subject to Phosphothreonine. One can recognise a PH domain in the interval glutamine 708–lysine 866. The region spanning histidine 893–isoleucine 1020 is the C2 domain. A Phosphoserine modification is found at serine 894. A Rho-GAP domain is found at valine 1054 to tyrosine 1248. Phosphoserine is present on serine 1264.

Homotetramer. Interacts with PDZK1. May interact with CCPG1. Interacts with FES/FPS, ABL1, PIK3R1 and GRB2. Interacts with HCK. Interacts with SH2D5. Interacts with DLG4. Post-translationally, autophosphorylated. Phosphorylated by FES/FPS on tyrosine residues, leading to down-regulation of the BCR kinase activity. Phosphorylation at Tyr-177 by HCK is important for interaction with GRB2.

The protein localises to the postsynaptic density. The protein resides in the cell projection. Its subcellular location is the dendritic spine. It localises to the axon. It is found in the synapse. It catalyses the reaction L-seryl-[protein] + ATP = O-phospho-L-seryl-[protein] + ADP + H(+). The catalysed reaction is L-threonyl-[protein] + ATP = O-phospho-L-threonyl-[protein] + ADP + H(+). Protein with a unique structure having two opposing regulatory activities toward small GTP-binding proteins. The C-terminus is a GTPase-activating protein (GAP) domain which stimulates GTP hydrolysis by RAC1, RAC2 and CDC42. Accelerates the intrinsic rate of GTP hydrolysis of RAC1 or CDC42, leading to down-regulation of the active GTP-bound form. The central Dbl homology (DH) domain functions as guanine nucleotide exchange factor (GEF) that modulates the GTPases CDC42, RHOA and RAC1. Promotes the conversion of CDC42, RHOA and RAC1 from the GDP-bound to the GTP-bound form. The amino terminus contains an intrinsic kinase activity. Functions as an important negative regulator of neuronal RAC1 activity. Regulates macrophage functions such as CSF1-directed motility and phagocytosis through the modulation of RAC1 activity. Plays a major role as a RHOA GEF in keratinocytes being involved in focal adhesion formation and keratinocyte differentiation. The polypeptide is Breakpoint cluster region protein (Homo sapiens (Human)).